The primary structure comprises 440 residues: Thymidine phosphorylase (440 aa).

The protein belongs to the thymidine/pyrimidine-nucleoside phosphorylase family. In terms of assembly, homodimer.

The enzyme catalyses thymidine + phosphate = 2-deoxy-alpha-D-ribose 1-phosphate + thymine. It participates in pyrimidine metabolism; dTMP biosynthesis via salvage pathway; dTMP from thymine: step 1/2. In terms of biological role, the enzymes which catalyze the reversible phosphorolysis of pyrimidine nucleosides are involved in the degradation of these compounds and in their utilization as carbon and energy sources, or in the rescue of pyrimidine bases for nucleotide synthesis. This chain is Thymidine phosphorylase, found in Rhizobium meliloti (strain 1021) (Ensifer meliloti).